A 317-amino-acid chain; its full sequence is Retinol dehydrogenase 16 (317 aa).

33-57 (FITGCDSGFGKLLARQLDARGLRVL) serves as a coordination point for NAD(+). S164 is a substrate binding site. Residue Y176 is the Proton acceptor of the active site. Residues 289–309 (LLYLPMSYMPTFLVDAIMYWV) form a helical membrane-spanning segment.

Belongs to the short-chain dehydrogenases/reductases (SDR) family. Homodimer. Not N-glycosylated. As to expression, highly expressed in adult liver (at protein level). Detected in endometrium, liver and foreskin. Detected in the spineous layers of adult skin, and at lower levels in basal and granular skin layers. Detected in fetal liver and lung.

The protein localises to the microsome membrane. Its subcellular location is the endoplasmic reticulum membrane. It carries out the reaction all-trans-retinol--[retinol-binding protein] + NAD(+) = all-trans-retinal--[retinol-binding protein] + NADH + H(+). The enzyme catalyses all-trans-retinol + NAD(+) = all-trans-retinal + NADH + H(+). The catalysed reaction is 13-cis-retinol + NAD(+) = 13-cis-retinal + NADH + H(+). It catalyses the reaction 11-cis-retinol + NAD(+) = 11-cis-retinal + NADH + H(+). It carries out the reaction 9-cis-retinol + NAD(+) = 9-cis-retinal + NADH + H(+). The enzyme catalyses 5alpha-androstane-3alpha,17beta-diol + NAD(+) = 17beta-hydroxy-5alpha-androstan-3-one + NADH + H(+). The catalysed reaction is androsterone + NAD(+) = 5alpha-androstan-3,17-dione + NADH + H(+). It participates in cofactor metabolism; retinol metabolism. Inhibited by citral, perillyl alcohol, geraniol, farnesol and geranyl geraniol. Its function is as follows. Oxidoreductase with a preference for NAD. Oxidizes all-trans-retinol, 9-cis-retinol, 11-cis-retinol and 13-cis-retinol to the corresponding aldehydes. Has higher activity towards CRBP-bound retinol than with free retinol. Also oxidizes 3-alpha-hydroxysteroids. Oxidizes androstanediol and androsterone to dihydrotestosterone and androstanedione. Can also catalyze the reverse reaction. The sequence is that of Retinol dehydrogenase 16 from Homo sapiens (Human).